A 147-amino-acid polypeptide reads, in one-letter code: Deoxyuridine 5'-triphosphate nucleotidohydrolase (147 aa).

Residue R24 coordinates Mg(2+). DUTP is bound by residues 68–70 (PRS), 82–85 (GVID), Y88, G93, I95, and R111.

Belongs to the dUTPase family. It depends on Mg(2+) as a cofactor.

It catalyses the reaction dUTP + H2O = dUMP + diphosphate + H(+). Its function is as follows. This enzyme is involved in nucleotide metabolism: it produces dUMP, the immediate precursor of thymidine nucleotides and it decreases the intracellular concentration of dUTP so that uracil cannot be incorporated into DNA. The polypeptide is Deoxyuridine 5'-triphosphate nucleotidohydrolase (OPG046) (Camelus).